A 675-amino-acid polypeptide reads, in one-letter code: Secretogranin-1 (675 aa).

Positions Met1 to Ser20 are cleaved as a signal peptide. A disulfide bridge connects residues Cys36 and Cys57. Residues Ser64–Ser90 are compositionally biased toward basic and acidic residues. Disordered stretches follow at residues Ser64–Thr507 and Asn528–Thr555. Phosphoserine occurs at positions 93, 99, 100, 129, and 147. Ser93 is a glycosylation site (O-linked (Xyl...) (chondroitin sulfate) serine). Basic and acidic residues-rich tracts occupy residues Lys148–Lys161 and Gly168–Glu248. Ser190 is subject to Phosphoserine. O-linked (Xyl...) (chondroitin sulfate) serine glycosylation occurs at Ser236. The span at Pro250 to Ala269 shows a compositional bias: acidic residues. 5 positions are modified to phosphoserine: Ser255, Ser259, Ser291, Ser309, and Ser333. The span at Tyr292–Asp311 shows a compositional bias: basic and acidic residues. Tyr339 is subject to Sulfotyrosine. 2 stretches are compositionally biased toward basic and acidic residues: residues Gly361–Lys410 and Ser429–Lys452. Residues Ser362, Ser372, Ser375, and Ser397 each carry the phosphoserine modification. Sulfotyrosine is present on Tyr469. Phosphoserine occurs at positions 490, 529, and 540. Tyr563 bears the Sulfotyrosine mark. The interval Asp620–Leu646 is disordered. Tyr622 carries the post-translational modification Sulfotyrosine; partial. Phosphoserine is present on Ser624. The span at Glu637–Leu646 shows a compositional bias: basic and acidic residues. Arg674 is modified (arginine amide; in CCB peptide short form).

This sequence belongs to the chromogranin/secretogranin protein family. As to quaternary structure, interacts with ITPR1 in the secretory granules. In terms of processing, extensively processed in glucagonoma tissue by limited proteolysis at conserved basic residues. Alternative processing are seen in different tissues. The proglucagon-converting enzymes present in transformed alpha-cells are likely candidates to be involved in tissue-specific processing. In terms of tissue distribution, expressed in the brain, adrenal medulla and anterior pituitary. In the brain, localized to the hippocampal formation, the endocrine hypothalamus, the olfactory system, and in anatomically distinct structures in the pons-medulla.

It localises to the secreted. Functionally, secretogranin-1 is a neuroendocrine secretory granule protein, which may be the precursor for other biologically active peptides. In Rattus norvegicus (Rat), this protein is Secretogranin-1 (Chgb).